Consider the following 228-residue polypeptide: uncharacterized protein (228 aa).

This is an uncharacterized protein from Rickettsia prowazekii (strain Madrid E).